The sequence spans 128 residues: Aspartate 1-decarboxylase (128 aa).

Ser25 (schiff-base intermediate with substrate; via pyruvic acid) is an active-site residue. Residue Ser25 is modified to Pyruvic acid (Ser). Thr57 lines the substrate pocket. Tyr58 (proton donor) is an active-site residue. Position 73 to 75 (73 to 75 (GAA)) interacts with substrate.

This sequence belongs to the PanD family. Heterooctamer of four alpha and four beta subunits. Pyruvate is required as a cofactor. Is synthesized initially as an inactive proenzyme, which is activated by self-cleavage at a specific serine bond to produce a beta-subunit with a hydroxyl group at its C-terminus and an alpha-subunit with a pyruvoyl group at its N-terminus.

Its subcellular location is the cytoplasm. The enzyme catalyses L-aspartate + H(+) = beta-alanine + CO2. It functions in the pathway cofactor biosynthesis; (R)-pantothenate biosynthesis; beta-alanine from L-aspartate: step 1/1. Functionally, catalyzes the pyruvoyl-dependent decarboxylation of aspartate to produce beta-alanine. The polypeptide is Aspartate 1-decarboxylase (Chlorobium phaeovibrioides (strain DSM 265 / 1930) (Prosthecochloris vibrioformis (strain DSM 265))).